A 373-amino-acid chain; its full sequence is Dual-specificity RNA methyltransferase RlmN (373 aa).

The active-site Proton acceptor is Glu-94. One can recognise a Radical SAM core domain in the interval 100–339 (EDDRATLCVS…VIVRKTRGDD (240 aa)). Cys-107 and Cys-344 are joined by a disulfide. Positions 114, 118, and 121 each coordinate [4Fe-4S] cluster. S-adenosyl-L-methionine is bound by residues 168–169 (GE), Ser-200, 222–224 (SIH), and Asn-301. Cys-344 serves as the catalytic S-methylcysteine intermediate.

Belongs to the radical SAM superfamily. RlmN family. [4Fe-4S] cluster serves as cofactor.

It localises to the cytoplasm. It carries out the reaction adenosine(2503) in 23S rRNA + 2 reduced [2Fe-2S]-[ferredoxin] + 2 S-adenosyl-L-methionine = 2-methyladenosine(2503) in 23S rRNA + 5'-deoxyadenosine + L-methionine + 2 oxidized [2Fe-2S]-[ferredoxin] + S-adenosyl-L-homocysteine. The enzyme catalyses adenosine(37) in tRNA + 2 reduced [2Fe-2S]-[ferredoxin] + 2 S-adenosyl-L-methionine = 2-methyladenosine(37) in tRNA + 5'-deoxyadenosine + L-methionine + 2 oxidized [2Fe-2S]-[ferredoxin] + S-adenosyl-L-homocysteine. Its function is as follows. Specifically methylates position 2 of adenine 2503 in 23S rRNA and position 2 of adenine 37 in tRNAs. m2A2503 modification seems to play a crucial role in the proofreading step occurring at the peptidyl transferase center and thus would serve to optimize ribosomal fidelity. This Shewanella denitrificans (strain OS217 / ATCC BAA-1090 / DSM 15013) protein is Dual-specificity RNA methyltransferase RlmN.